The following is a 182-amino-acid chain: Ribosome-recycling factor (182 aa).

It belongs to the RRF family.

The protein resides in the cytoplasm. In terms of biological role, responsible for the release of ribosomes from messenger RNA at the termination of protein biosynthesis. May increase the efficiency of translation by recycling ribosomes from one round of translation to another. The polypeptide is Ribosome-recycling factor (Prochlorococcus marinus (strain SARG / CCMP1375 / SS120)).